Consider the following 211-residue polypeptide: Protein crossbronx-like (211 aa).

The UBC core domain maps to 17 to 177 (NQGYQILAEY…VRNSILWSCK (161 aa)).

Belongs to the ubiquitin-conjugating enzyme family. FTS subfamily.

This Drosophila grimshawi (Hawaiian fruit fly) protein is Protein crossbronx-like.